Here is a 27-residue protein sequence, read N- to C-terminus: Allergen C-C (27 aa).

Belongs to the protease inhibitor I6 (cereal trypsin/alpha-amylase inhibitor) family.

Its subcellular location is the secreted. The sequence is that of Allergen C-C from Triticum aestivum (Wheat).